The following is a 286-amino-acid chain: Beta-lactamase SHV-2 (286 aa).

An N-terminal signal peptide occupies residues 1–21; it reads MRYIRLCIISLLATLPLAVHA. The active-site Acyl-ester intermediate is serine 66. An intrachain disulfide couples cysteine 73 to cysteine 119. Glutamate 164 serves as the catalytic Proton acceptor. 230–232 is a substrate binding site; it reads KTG.

This sequence belongs to the class-A beta-lactamase family.

It catalyses the reaction a beta-lactam + H2O = a substituted beta-amino acid. Functionally, this enzyme hydrolyzes cefotaxime, ceftazidime and other broad spectrum cephalosporins. In Klebsiella pneumoniae, this protein is Beta-lactamase SHV-2 (bla).